The sequence spans 316 residues: Low affinity immunoglobulin gamma Fc region receptor II-a (316 aa).

Residues methionine 1–alanine 35 form the signal peptide. Over alanine 36–glycine 216 the chain is Extracellular. Ig-like C2-type domains are found at residues proline 38–threonine 117 and glutamate 121–threonine 203. Cystine bridges form between cysteine 61-cysteine 103 and cysteine 142-cysteine 186. 3 N-linked (GlcNAc...) asparagine glycosylation sites follow: asparagine 96, asparagine 170, and asparagine 177. The chain crosses the membrane as a helical span at residues isoleucine 217 to tyrosine 239. Residues cysteine 240–asparagine 316 lie on the Cytoplasmic side of the membrane. Residues tyrosine 287 and tyrosine 303 each carry the phosphotyrosine; by SRC-type Tyr-kinases modification.

In terms of assembly, interacts with INPP5D/SHIP1 and INPPL1/SHIP2, regulating its function. Interacts with APCS and FGR. Interacts with HCK. Phosphorylated by SRC-type Tyr-kinases such as HCK, LYN, BLK, FYN and SYK.

It localises to the cell membrane. Functionally, binds to the Fc region of immunoglobulins gamma. Low affinity receptor. By binding to IgG it initiates cellular responses against pathogens and soluble antigens. Promotes phagocytosis of opsonized antigens. This chain is Low affinity immunoglobulin gamma Fc region receptor II-a (FCGR2A), found in Pan troglodytes (Chimpanzee).